An 86-amino-acid polypeptide reads, in one-letter code: MAGTGNDNPGNFANRPKEEVQAIASKGGQASHSGGFASMDPEKQREIASKGGKASSGSFEPGSEKAREAGRKGGKASGGTGADDDE.

The segment covering 1–11 (MAGTGNDNPGN) has biased composition (polar residues). The disordered stretch occupies residues 1–86 (MAGTGNDNPG…SGGTGADDDE (86 aa)). Over residues 49–58 (SKGGKASSGS) the composition is skewed to low complexity. Basic and acidic residues predominate over residues 62 to 71 (GSEKAREAGR). Residues 75–86 (KASGGTGADDDE) show a composition bias toward gly residues.

This sequence belongs to the con-10 family.

The chain is Conidiation-specific protein 10 (con-10) from Neurospora crassa (strain ATCC 24698 / 74-OR23-1A / CBS 708.71 / DSM 1257 / FGSC 987).